Here is a 171-residue protein sequence, read N- to C-terminus: Protein phosphatase 1 regulatory subunit 1A (171 aa).

Met-1 is subject to N-acetylmethionine. Residues 9-12 (KIQF) form an essential for activity region. The disordered stretch occupies residues 17 to 171 (LEPHLDPEAA…PLDSQGASLV (155 aa)). The span at 19–29 (PHLDPEAAEQI) shows a compositional bias: basic and acidic residues. Thr-35 is modified (phosphothreonine; by PKA). The essential for activity stretch occupies residues 42–54 (TSDQSSPEVDEDR). Residues Ser-43, Ser-46, Ser-47, and Ser-67 each carry the phosphoserine modification. Residues 122-133 (GSASRPDTSGTA) show a composition bias toward polar residues. Residues 137-148 (AESKPKTQEQRG) show a composition bias toward basic and acidic residues. The tract at residues 143 to 171 (TQEQRGVEPSTEDLSAHMLPLDSQGASLV) is interaction with PPP1R15A.

It belongs to the protein phosphatase inhibitor 1 family. As to quaternary structure, interacts with PPP1R15A. In terms of processing, phosphorylation of Thr-35 is required for activity.

In terms of biological role, inhibitor of protein-phosphatase 1. This protein may be important in hormonal control of glycogen metabolism. Hormones that elevate intracellular cAMP increase I-1 activity in many tissues. I-1 activation may impose cAMP control over proteins that are not directly phosphorylated by PKA. Following a rise in intracellular calcium, I-1 is inactivated by calcineurin (or PP2B). Does not inhibit type-2 phosphatases. This is Protein phosphatase 1 regulatory subunit 1A (Ppp1r1a) from Rattus norvegicus (Rat).